We begin with the raw amino-acid sequence, 201 residues long: LexA repressor (201 aa).

The H-T-H motif DNA-binding region spans 28–48 (LREIAAQLGISGTLGVMKHLE). Active-site for autocatalytic cleavage activity residues include S120 and K157.

Belongs to the peptidase S24 family. Homodimer.

It catalyses the reaction Hydrolysis of Ala-|-Gly bond in repressor LexA.. In terms of biological role, represses a number of genes involved in the response to DNA damage (SOS response), including recA and lexA. In the presence of single-stranded DNA, RecA interacts with LexA causing an autocatalytic cleavage which disrupts the DNA-binding part of LexA, leading to derepression of the SOS regulon and eventually DNA repair. This is LexA repressor from Citrifermentans bemidjiense (strain ATCC BAA-1014 / DSM 16622 / JCM 12645 / Bem) (Geobacter bemidjiensis).